A 136-amino-acid polypeptide reads, in one-letter code: Methenyltetrahydromethanopterin cyclohydrolase (136 aa).

It belongs to the MCH family.

Its subcellular location is the cytoplasm. It carries out the reaction 5,10-methenyl-5,6,7,8-tetrahydromethanopterin + H2O = N(5)-formyl-5,6,7,8-tetrahydromethanopterin + H(+). Its pathway is one-carbon metabolism; formaldehyde degradation; formate from formaldehyde (H(4)MPT route): step 3/5. Its function is as follows. Catalyzes the hydrolysis of methenyl-H(4)MPT(+) to 5-formyl-H(4)MPT. The sequence is that of Methenyltetrahydromethanopterin cyclohydrolase (mch) from Methylococcus thermophilus.